Consider the following 554-residue polypeptide: Phosphomethylpyrimidine synthase (554 aa).

Residues Asn188, Met217, Tyr246, His282, 302-304 (SRG), 343-346 (DGLR), and Glu382 contribute to the substrate site. His386 is a Zn(2+) binding site. Tyr409 serves as a coordination point for substrate. His450 is a Zn(2+) binding site. Cys530, Cys533, and Cys538 together coordinate [4Fe-4S] cluster.

The protein belongs to the ThiC family. In terms of assembly, homodimer. Requires [4Fe-4S] cluster as cofactor.

It catalyses the reaction 5-amino-1-(5-phospho-beta-D-ribosyl)imidazole + S-adenosyl-L-methionine = 4-amino-2-methyl-5-(phosphooxymethyl)pyrimidine + CO + 5'-deoxyadenosine + formate + L-methionine + 3 H(+). It participates in cofactor biosynthesis; thiamine diphosphate biosynthesis. Catalyzes the synthesis of the hydroxymethylpyrimidine phosphate (HMP-P) moiety of thiamine from aminoimidazole ribotide (AIR) in a radical S-adenosyl-L-methionine (SAM)-dependent reaction. This is Phosphomethylpyrimidine synthase from Coxiella burnetii (strain Dugway 5J108-111).